Reading from the N-terminus, the 203-residue chain is LexA repressor (203 aa).

The segment at residues 30–50 is a DNA-binding region (H-T-H motif); that stretch reads VREICQAVSLKSTSTVHGHLK. Active-site for autocatalytic cleavage activity residues include Ser-127 and Lys-164.

It belongs to the peptidase S24 family. In terms of assembly, homodimer.

It catalyses the reaction Hydrolysis of Ala-|-Gly bond in repressor LexA.. Represses a number of genes involved in the response to DNA damage (SOS response), including recA and lexA. In the presence of single-stranded DNA, RecA interacts with LexA causing an autocatalytic cleavage which disrupts the DNA-binding part of LexA, leading to derepression of the SOS regulon and eventually DNA repair. The polypeptide is LexA repressor (Clostridium perfringens (strain ATCC 13124 / DSM 756 / JCM 1290 / NCIMB 6125 / NCTC 8237 / Type A)).